A 471-amino-acid chain; its full sequence is MKIKTRFAPSPTGYLHVGGARTALYSWLFARNHGGEFVLRIEDTDLERSTPEAIEAIMDGMNWLSLEWDEGPYFQTKRFDRYNAVIDQMLEEGTAYKCYCSKERLEALREEQMAKGEKPRYDGRCRHSHEHHADDEPCVVRFANPQEGSVVFDDQIRGPIEFSNQELDDLIIRRTDGSPTYNFCVVVDDWDMEITHVIRGEDHINNTPRQINILKALKAPVPVYAHVSMINGDDGKKLSKRHGAVSVMQYRDDGYLPEALLNYLVRLGWSHGDQEIFTREEMIKYFTLNAVSKSASAFNTDKLLWLNHHYINALPPEYVATHLQWHIEQENIDTRNGPQLADLVKLLGERCKTLKEMAQSCRYFYEDFAEFDADAAKKHLRPVARQPLEVVRDKLAAITDWTAENVHHAIQATADELEVGMGKVGMPLRVAVTGAGQSPALDVTVHAIGKTRSIERINKALAFIAERENQQ.

Positions P9 to G19 match the 'HIGH' region motif. Residues C98, C100, C125, and H127 each coordinate Zn(2+). A 'KMSKS' region motif is present at residues K237 to R241. K240 provides a ligand contact to ATP.

Belongs to the class-I aminoacyl-tRNA synthetase family. Glutamate--tRNA ligase type 1 subfamily. Monomer. The cofactor is Zn(2+).

The protein localises to the cytoplasm. The catalysed reaction is tRNA(Glu) + L-glutamate + ATP = L-glutamyl-tRNA(Glu) + AMP + diphosphate. Catalyzes the attachment of glutamate to tRNA(Glu) in a two-step reaction: glutamate is first activated by ATP to form Glu-AMP and then transferred to the acceptor end of tRNA(Glu). This chain is Glutamate--tRNA ligase, found in Escherichia coli O157:H7.